The primary structure comprises 671 residues: MDSIEQQLTQLRTTLRHHEYLYHVMDAPEVPDAEYDRLMRELRELEAQHPELVTPDSPTQRVGAAPLASFSQVRHEVPMLSLDNVFDEESFLAFNKRVQDRLKSADTLTWCCELKLDGLAVSILYENGLLVRAATRGDGTTGEDITANVRTIRAIPLTLRGDNIPARLEVRGEVFLPQKGFEKINDEARRTGGKIFANPRNAAAGSLRQLDPRITAKRPLTFFCYGVGILEGGVLPDTHLGRLLQFKEWGLPVSNRVQLCDSPEAVLAFYHKVEEDRPSLGFDIDGVVIKVNSLALQEQLGFVARAPRWAVAFKFPAQEQMTFVRDVEFQVGRTGAITPVARLEPVQVAGVLVSNATLHNADEIARLGLRIGDKVVIRRAGDVIPQVVNVVESERPDDTREIVFPAHCPVCGSDVERVEGEVVTRCTGGLICGAQRKEALKHFVSRRALDVDGMGDKIIDQLVEKEYVHTPADLFRLSAGKLTGLDRMGPKSAQNVVNALEKAKETTFARFLYALGIREVGEATAAGLAAHFGTLEQLEKATIDDLQKVPDVGIVVATHVFNFFAEESNRDVIGKLLEEGIHWPAPVVINVEEIDSPFAGKTVVLTGSLSQMSRDDAKARLVAIGAKVAGSVSKKTDLVIAGEAAGSKLAKAQELGIDVIDEAEMLRLFGE.

NAD(+) is bound by residues 32-36, 81-82, and E113; these read DAEYD and SL. The active-site N6-AMP-lysine intermediate is K115. NAD(+) contacts are provided by R136, E173, K290, and K314. Residues C408, C411, C426, and C432 each contribute to the Zn(2+) site. Residues 593 to 671 enclose the BRCT domain; sequence EIDSPFAGKT…EAEMLRLFGE (79 aa).

Belongs to the NAD-dependent DNA ligase family. LigA subfamily. Mg(2+) serves as cofactor. Mn(2+) is required as a cofactor.

It carries out the reaction NAD(+) + (deoxyribonucleotide)n-3'-hydroxyl + 5'-phospho-(deoxyribonucleotide)m = (deoxyribonucleotide)n+m + AMP + beta-nicotinamide D-nucleotide.. DNA ligase that catalyzes the formation of phosphodiester linkages between 5'-phosphoryl and 3'-hydroxyl groups in double-stranded DNA using NAD as a coenzyme and as the energy source for the reaction. It is essential for DNA replication and repair of damaged DNA. This chain is DNA ligase, found in Enterobacter sp. (strain 638).